The chain runs to 241 residues: DNA repair protein RecO (241 aa).

It belongs to the RecO family.

In terms of biological role, involved in DNA repair and RecF pathway recombination. This chain is DNA repair protein RecO, found in Orientia tsutsugamushi (strain Boryong) (Rickettsia tsutsugamushi).